Reading from the N-terminus, the 696-residue chain is Polyribonucleotide nucleotidyltransferase (696 aa).

Residues aspartate 489 and aspartate 495 each coordinate Mg(2+). In terms of domain architecture, KH spans 556–615 (PQYVTMKINPEKIRDVIGKGGVVIREITEATNCAIDISDDGTIKIAAHTTEEGEAAKRRI). In terms of domain architecture, S1 motif spans 625 to 693 (GKVYEGTVVK…RQGRVRLSMK (69 aa)).

It belongs to the polyribonucleotide nucleotidyltransferase family. Component of the RNA degradosome, which is a multiprotein complex involved in RNA processing and mRNA degradation. The cofactor is Mg(2+).

Its subcellular location is the cytoplasm. It carries out the reaction RNA(n+1) + phosphate = RNA(n) + a ribonucleoside 5'-diphosphate. Its function is as follows. Involved in mRNA degradation. Catalyzes the phosphorolysis of single-stranded polyribonucleotides processively in the 3'- to 5'-direction. The sequence is that of Polyribonucleotide nucleotidyltransferase from Coxiella burnetii (strain CbuG_Q212) (Coxiella burnetii (strain Q212)).